Reading from the N-terminus, the 243-residue chain is Adenosylcobinamide-GDP ribazoletransferase (243 aa).

The next 5 helical transmembrane spans lie at 31-51 (LLWY…AHLL), 61-81 (AAII…DGLA), 109-129 (IAVV…LSLL), 134-154 (GIYL…LLAT), and 188-208 (LLLG…FVWL).

The protein belongs to the CobS family. Mg(2+) is required as a cofactor.

It localises to the cell inner membrane. It catalyses the reaction alpha-ribazole + adenosylcob(III)inamide-GDP = adenosylcob(III)alamin + GMP + H(+). The catalysed reaction is alpha-ribazole 5'-phosphate + adenosylcob(III)inamide-GDP = adenosylcob(III)alamin 5'-phosphate + GMP + H(+). It participates in cofactor biosynthesis; adenosylcobalamin biosynthesis; adenosylcobalamin from cob(II)yrinate a,c-diamide: step 7/7. Functionally, joins adenosylcobinamide-GDP and alpha-ribazole to generate adenosylcobalamin (Ado-cobalamin). Also synthesizes adenosylcobalamin 5'-phosphate from adenosylcobinamide-GDP and alpha-ribazole 5'-phosphate. The sequence is that of Adenosylcobinamide-GDP ribazoletransferase from Ectopseudomonas mendocina (strain ymp) (Pseudomonas mendocina).